Consider the following 308-residue polypeptide: Aspartate carbamoyltransferase catalytic subunit (308 aa).

The carbamoyl phosphate site is built by Arg-58 and Thr-59. Lys-86 provides a ligand contact to L-aspartate. Carbamoyl phosphate contacts are provided by Arg-108, His-136, and Gln-139. Residues Arg-169 and Arg-222 each contribute to the L-aspartate site. Residues Gly-264 and Pro-265 each coordinate carbamoyl phosphate.

This sequence belongs to the aspartate/ornithine carbamoyltransferase superfamily. ATCase family. Heterododecamer (2C3:3R2) of six catalytic PyrB chains organized as two trimers (C3), and six regulatory PyrI chains organized as three dimers (R2).

The catalysed reaction is carbamoyl phosphate + L-aspartate = N-carbamoyl-L-aspartate + phosphate + H(+). It functions in the pathway pyrimidine metabolism; UMP biosynthesis via de novo pathway; (S)-dihydroorotate from bicarbonate: step 2/3. Catalyzes the condensation of carbamoyl phosphate and aspartate to form carbamoyl aspartate and inorganic phosphate, the committed step in the de novo pyrimidine nucleotide biosynthesis pathway. In Campylobacter hominis (strain ATCC BAA-381 / DSM 21671 / CCUG 45161 / LMG 19568 / NCTC 13146 / CH001A), this protein is Aspartate carbamoyltransferase catalytic subunit.